Reading from the N-terminus, the 670-residue chain is ATP-dependent DNA helicase Rep (670 aa).

Residues 1–277 (MLFNEHQKKA…IIMQHNYRSS (277 aa)) enclose the UvrD-like helicase ATP-binding domain. Residues 22–29 (AGAGSGKT) and R275 each bind ATP. The UvrD-like helicase C-terminal domain maps to 278-562 (GRILKVANAL…QLMTLHASKG (285 aa)).

Belongs to the helicase family. UvrD subfamily. Homodimer.

It carries out the reaction Couples ATP hydrolysis with the unwinding of duplex DNA by translocating in the 3'-5' direction.. The catalysed reaction is ATP + H2O = ADP + phosphate + H(+). Its function is as follows. Rep helicase is a single-stranded DNA-dependent ATPase involved in DNA replication; it can initiate unwinding at a nick in the DNA. It binds to the single-stranded DNA and acts in a progressive fashion along the DNA in the 3' to 5' direction. This chain is ATP-dependent DNA helicase Rep, found in Buchnera aphidicola subsp. Baizongia pistaciae (strain Bp).